The following is an 84-amino-acid chain: Beta-toxin Tf1a (84 aa).

The signal sequence occupies residues 1–20; that stretch reads MKGMILFISCLLLIGIVVEC. The LCN-type CS-alpha/beta domain maps to 21–82; it reads KEGYLMDHEG…VWERATNRCG (62 aa). Cystine bridges form between cysteine 31–cysteine 81, cysteine 35–cysteine 57, cysteine 43–cysteine 62, and cysteine 47–cysteine 64. Cysteine amide is present on cysteine 81.

It belongs to the long (4 C-C) scorpion toxin superfamily. Sodium channel inhibitor family. Beta subfamily. Expressed by the venom gland.

Its subcellular location is the secreted. Functionally, beta toxins bind voltage-independently at site-4 of sodium channels (Nav) and shift the voltage of activation toward more negative potentials thereby affecting sodium channel activation and promoting spontaneous and repetitive firing. The toxin induces a leftward shift, on all channels tested (including Blattella germanica and Varroa destructor Nav1), displacing a change in voltage dependence activation to more hyperpolarized potentials. In addition, the toxin mostly inhibits peak current of hNav1.4/SCN4A (53% inhibition of peak current at 100 nM) and hNav1.5/SCN5A (71% inhibition). This Tityus fasciolatus (Central Brazilian scorpion) protein is Beta-toxin Tf1a.